Consider the following 378-residue polypeptide: uncharacterized protein (378 aa).

The protein belongs to the IIV-6 329R family.

This is an uncharacterized protein from Acheta domesticus (House cricket).